A 242-amino-acid polypeptide reads, in one-letter code: Biosynthetic peptidoglycan transglycosylase (242 aa).

A helical transmembrane segment spans residues 19–39; the sequence is LMVVLAVFWAGGIALFSVAPV.

This sequence belongs to the glycosyltransferase 51 family.

It localises to the cell inner membrane. It catalyses the reaction [GlcNAc-(1-&gt;4)-Mur2Ac(oyl-L-Ala-gamma-D-Glu-L-Lys-D-Ala-D-Ala)](n)-di-trans,octa-cis-undecaprenyl diphosphate + beta-D-GlcNAc-(1-&gt;4)-Mur2Ac(oyl-L-Ala-gamma-D-Glu-L-Lys-D-Ala-D-Ala)-di-trans,octa-cis-undecaprenyl diphosphate = [GlcNAc-(1-&gt;4)-Mur2Ac(oyl-L-Ala-gamma-D-Glu-L-Lys-D-Ala-D-Ala)](n+1)-di-trans,octa-cis-undecaprenyl diphosphate + di-trans,octa-cis-undecaprenyl diphosphate + H(+). The protein operates within cell wall biogenesis; peptidoglycan biosynthesis. Peptidoglycan polymerase that catalyzes glycan chain elongation from lipid-linked precursors. In Shigella boydii serotype 4 (strain Sb227), this protein is Biosynthetic peptidoglycan transglycosylase.